We begin with the raw amino-acid sequence, 270 residues long: tRNA pseudouridine synthase A (270 aa).

Asp-60 serves as the catalytic Nucleophile. The segment at 107–111 (FHARF) is RNA binding. Tyr-118 lines the substrate pocket. The tract at residues 168-172 (QCQSR) is interaction with tRNA.

The protein belongs to the tRNA pseudouridine synthase TruA family. In terms of assembly, homodimer.

It catalyses the reaction uridine(38/39/40) in tRNA = pseudouridine(38/39/40) in tRNA. Formation of pseudouridine at positions 38, 39 and 40 in the anticodon stem and loop of transfer RNAs. The sequence is that of tRNA pseudouridine synthase A from Escherichia coli O139:H28 (strain E24377A / ETEC).